The sequence spans 618 residues: Matrix metalloproteinase-24 (618 aa).

Residues 1 to 41 (MPRSRGGRAAPGQAARWSGWRAPGRLLPLLPALCCLAAAAG) form the signal peptide. Positions 42–128 (AGKPAGADAP…HLSRRRRNKR (87 aa)) are excised as a propeptide. Over 42 to 575 (AGKPAGADAP…IDDVPGSVNA (534 aa)) the chain is Extracellular. A Cysteine switch motif is present at residues 110-117 (PRCGVPDH). Zn(2+) contacts are provided by Cys-112 and His-255. Residue Glu-256 is part of the active site. The Zn(2+) site is built by His-259 and His-265. The disordered stretch occupies residues 296 to 352 (QKIYGPPAEPLEPTRPLPTLPVRRIHSPSERKHERQPRPPRPPLGDRPSTPGAKPNI). Residues 302 to 314 (PAEPLEPTRPLPT) are compositionally biased toward pro residues. Over residues 322 to 332 (SPSERKHERQP) the composition is skewed to basic and acidic residues. Hemopexin repeat units lie at residues 350–398 (PNIC…WKGL), 399–444 (PARI…GSCL), 446–494 (REGI…KGIP), and 495–542 (QAPQ…WMGC). Residues Cys-353 and Cys-542 are joined by a disulfide bond. Residues 576–596 (VAVVVPCTLSLCLLVLLYTIF) form a helical membrane-spanning segment. The Cytoplasmic segment spans residues 597-618 (QFKNKTGPQPVTYYKRPVQEWV). Positions 616-618 (EWV) match the PDZ-binding motif.

It belongs to the peptidase M10A family. Interacts (via PDZ-binding motif) with APBA3 (via PDZ domain). Interacts with GRIP1 and GRIP2. The cofactor is Zn(2+). Requires Ca(2+) as cofactor. Post-translationally, cleaved by a furin endopeptidase in the trans-Golgi network. In terms of tissue distribution, predominantly expressed in the nervous system: while enriched in the central nervous system, expression is also detected in the peripheral nervous system, including the trigeminal ganglion. Expression is not restricted to the nervous system: it is also enriched in the thymus, with a lower level of expression present in the aorta. In brain, high expression is present in the brain parenchyma, particularly within the neocortex.

It is found in the cell membrane. Its subcellular location is the golgi apparatus. The protein resides in the trans-Golgi network membrane. The protein localises to the secreted. It localises to the extracellular space. It is found in the extracellular matrix. Functionally, metalloprotease that mediates cleavage of N-cadherin (CDH2) and acts as a regulator of neuro-immune interactions and neural stem cell quiescence. Involved in cell-cell interactions between nociceptive neurites and mast cells, possibly by mediating cleavage of CDH2, thereby acting as a mediator of peripheral thermal nociception and inflammatory hyperalgesia. Key regulator of neural stem cells quiescence by mediating cleavage of CDH2, affecting CDH2-mediated anchorage of neural stem cells to ependymocytes in the adult subependymal zone, leading to modulate their quiescence. May play a role in axonal growth. Able to activate progelatinase A. May also be a proteoglycanase involved in degradation of proteoglycans, such as dermatan sulfate and chondroitin sulfate proteoglycans. Cleaves partially fibronectin, but not collagen type I, nor laminin. This is Matrix metalloproteinase-24 (Mmp24) from Rattus norvegicus (Rat).